A 106-amino-acid polypeptide reads, in one-letter code: uncharacterized protein (106 aa).

This is an uncharacterized protein from Pyrococcus woesei.